Reading from the N-terminus, the 58-residue chain is Weak neurotoxin D2B (58 aa).

3 cysteine pairs are disulfide-bonded: C3/C24, C17/C41, and C43/C54.

In terms of tissue distribution, expressed by the venom gland.

It is found in the secreted. Binds to muscle nicotinic acetylcholine receptor (nAChR) and inhibit acetylcholine from binding to the receptor, thereby impairing neuromuscular transmission. The chain is Weak neurotoxin D2B from Micrurus pyrrhocryptus (Coral snake).